A 252-amino-acid polypeptide reads, in one-letter code: NAD-dependent protein deacetylase (252 aa).

A Deacetylase sirtuin-type domain is found at 1 to 248; the sequence is MYLVEEAKKV…PEVISHIQSL (248 aa). NAD(+)-binding residues include A26, T30, F37, R38, Q102, V104, D105, and H120. F37 contributes to the nicotinamide binding site. Nicotinamide is bound by residues V104 and D105. Residue H120 is the Proton acceptor of the active site. Residues C128, C131, C153, and C155 each coordinate Zn(2+). Positions 191, 192, 216, and 234 each coordinate NAD(+).

This sequence belongs to the sirtuin family. Class U subfamily. The cofactor is Zn(2+).

It localises to the cytoplasm. It carries out the reaction N(6)-acetyl-L-lysyl-[protein] + NAD(+) + H2O = 2''-O-acetyl-ADP-D-ribose + nicotinamide + L-lysyl-[protein]. Functionally, NAD-dependent protein deacetylase which modulates the activities of several enzymes which are inactive in their acetylated form. Deacetylates the N-terminal lysine residue of Alba, the major archaeal chromatin protein and that, in turn, increases Alba's DNA binding affinity, thereby repressing transcription. This Sulfolobus acidocaldarius (strain ATCC 33909 / DSM 639 / JCM 8929 / NBRC 15157 / NCIMB 11770) protein is NAD-dependent protein deacetylase.